The sequence spans 265 residues: tRNA pseudouridine synthase A (265 aa).

Catalysis depends on aspartate 58, which acts as the Nucleophile. Substrate is bound at residue tyrosine 116.

It belongs to the tRNA pseudouridine synthase TruA family. In terms of assembly, homodimer.

The catalysed reaction is uridine(38/39/40) in tRNA = pseudouridine(38/39/40) in tRNA. Its function is as follows. Formation of pseudouridine at positions 38, 39 and 40 in the anticodon stem and loop of transfer RNAs. This chain is tRNA pseudouridine synthase A, found in Neisseria gonorrhoeae (strain ATCC 700825 / FA 1090).